The chain runs to 224 residues: Cytochrome c oxidase subunit 2 (224 aa).

At 1 to 26 (MSTWGQMNLMDPASPIQIEMMLFHDH) the chain is on the mitochondrial intermembrane side. Residues 27-48 (AMAILIGIFTLVSCLGVKLCFN) form a helical membrane-spanning segment. Residues 49-62 (TLSTRTMHEAQLLE) are Mitochondrial matrix-facing. A helical transmembrane segment spans residues 63 to 82 (TLWTILPAFLLVWLALPSLR). Topologically, residues 83–224 (LLYLLDEQSS…DVKDFINMCN (142 aa)) are mitochondrial intermembrane. Cu cation-binding residues include histidine 161, cysteine 196, glutamate 198, cysteine 200, histidine 204, and methionine 207. Glutamate 198 serves as a coordination point for Mg(2+).

Belongs to the cytochrome c oxidase subunit 2 family. Component of the cytochrome c oxidase (complex IV, CIV), a multisubunit enzyme composed of a catalytic core of 3 subunits and several supernumerary subunits. The complex exists as a monomer or a dimer and forms supercomplexes (SCs) in the inner mitochondrial membrane with ubiquinol-cytochrome c oxidoreductase (cytochrome b-c1 complex, complex III, CIII). Requires Cu cation as cofactor.

The protein localises to the mitochondrion inner membrane. It carries out the reaction 4 Fe(II)-[cytochrome c] + O2 + 8 H(+)(in) = 4 Fe(III)-[cytochrome c] + 2 H2O + 4 H(+)(out). Component of the cytochrome c oxidase, the last enzyme in the mitochondrial electron transport chain which drives oxidative phosphorylation. The respiratory chain contains 3 multisubunit complexes succinate dehydrogenase (complex II, CII), ubiquinol-cytochrome c oxidoreductase (cytochrome b-c1 complex, complex III, CIII) and cytochrome c oxidase (complex IV, CIV), that cooperate to transfer electrons derived from NADH and succinate to molecular oxygen, creating an electrochemical gradient over the inner membrane that drives transmembrane transport and the ATP synthase. Cytochrome c oxidase is the component of the respiratory chain that catalyzes the reduction of oxygen to water. Electrons originating from reduced cytochrome c in the intermembrane space (IMS) are transferred via the dinuclear copper A center (CU(A)) of subunit 2 and heme A of subunit 1 to the active site in subunit 1, a binuclear center (BNC) formed by heme A3 and copper B (CU(B)). The BNC reduces molecular oxygen to 2 water molecules using 4 electrons from cytochrome c in the IMS and 4 protons from the mitochondrial matrix. This Albinaria turrita (Door snail) protein is Cytochrome c oxidase subunit 2 (COII).